The chain runs to 1049 residues: Protein phosphatase 1 regulatory subunit 12A (1049 aa).

6 ANK repeats span residues 39–68, 72–101, 105–134, 138–164, 198–227, and 231–260; these read DDGA…DINY, DGLT…CINQ, EGWI…SVGV, EGET…RQGV, SGGT…DVNI, and DGWT…DMDV. Residues 302 to 947 are disordered; sequence LIETTTTGDN…RPYSRFEKDD (646 aa). Positions 303-315 are enriched in polar residues; that stretch reads IETTTTGDNNQSV. A compositionally biased stretch (basic and acidic residues) spans 319–341; that stretch reads KSKETLLLEPEKTAPRIETLEPE. A compositionally biased stretch (acidic residues) spans 359–371; it reads SEEEEEEDSESEN. Over residues 378-421 the composition is skewed to low complexity; sequence SSVPSSVSNSTPTTAPSSITVTSPTTPSNQVTTPTSPTKKVSTP. Residues 426–436 show a composition bias toward basic and acidic residues; that stretch reads SPKEEDRKDES. Positions 473–484 are enriched in low complexity; sequence RSASSPRLSSSL. Residues 485–497 show a composition bias toward basic and acidic residues; that stretch reads DNKDKEKEKEKTR. Residues 545-564 are compositionally biased toward polar residues; that stretch reads SDGTASTNRTSSYQRSTSHT. Low complexity predominate over residues 571–592; it reads SSSRDLPAKSSSASSLEPNNSK. Polar residues predominate over residues 593–607; sequence AWQPSSYYQSYSIHR. Low complexity predominate over residues 620-639; that stretch reads SSTSSSTTTTTTTSSVTSPT. Over residues 649 to 664 the composition is skewed to basic and acidic residues; the sequence is WAEESAEKEKEKEKES. The span at 665–686 shows a compositional bias: low complexity; it reads ATVIPTINTAGTTTTTSTTGTV. The segment covering 702–711 has biased composition (basic and acidic residues); it reads VRDEESESQR. Basic residues predominate over residues 712–722; sequence KARSRQARQSR. A compositionally biased stretch (basic and acidic residues) spans 747-789; that stretch reads RPREDEKEEKEKQDKEKQEEKKETETKEDDYRSRYRSFEEKYR. Residues 790 to 819 are compositionally biased toward low complexity; the sequence is TSLASSTTASSTIPSSSSSSSSSLYSTSSL. The span at 820–829 shows a compositional bias: polar residues; that stretch reads NRPNSLTGLT. A compositionally biased stretch (basic and acidic residues) spans 835–863; that stretch reads STRDTDRESDRKEKDEDRDGDDKSQPRSI. Basic residues predominate over residues 864–875; sequence RDRRRPREKRRS. Composition is skewed to basic and acidic residues over residues 890-906 and 934-947; these read PDHP…EPQS and GESR…EKDD.

PP1 comprises a catalytic subunit, and one or several targeting or regulatory subunits. Ppp1r12a mediates binding to myosin.

The protein resides in the cytoplasm. Regulates myosin phosphatase activity. In Danio rerio (Zebrafish), this protein is Protein phosphatase 1 regulatory subunit 12A (ppp1r12a).